Here is an 897-residue protein sequence, read N- to C-terminus: High molecular weight rhoptry protein 3 (897 aa).

The N-terminal stretch at 1–24 (MRSKHLVTLFIITFLSFSTVKVWG) is a signal peptide. Intrachain disulfides connect C157–C231, C244–C253, C262–C276, C421–C620, and C475–C536. Residues 597-615 (FVLYFISIISVLYINEYYY) form a helical membrane-spanning segment. Disordered regions lie at residues 788 to 845 (KEQS…SNLK) and 859 to 897 (QLDK…ENEL). Over residues 792–801 (KSTSAASTSD) the composition is skewed to polar residues. Over residues 802 to 817 (EISGSEGPSTESTSTG) the composition is skewed to low complexity. Residue S804 is modified to Phosphoserine; by CDPK1. The segment covering 820–832 (GEDKTTDNTYKEM) has biased composition (basic and acidic residues). Basic residues predominate over residues 865 to 876 (PKKKKSKRKKKR). Residues 877–889 (DSSSDRILLEESK) are compositionally biased toward basic and acidic residues.

As to quaternary structure, component of the RhopH complex. RhopH complex is composed of CLAG3.1/CLAG3.2, RhopH2 and RhopH3 with a 1:1:1 subunit stoichiometry. Interacts with CLAG3.1/CLAG3.2. Interacts with CDPK1; the interaction promotes RhopH3 phosphorylation in merozoites. In terms of processing, proteolytically cleaved near C-terminus.

The protein resides in the host cell membrane. Its subcellular location is the parasitophorous vacuole membrane. It localises to the cytoplasm. It is found in the cytoplasmic vesicle. The protein localises to the secretory vesicle. The protein resides in the rhoptry. In terms of biological role, participates in the formation of new permeability pathways in Plasmodium-infected erythrocytes enabling the uptake of nutrients from the blood plasma. Required for maintaining invasion capacity of merozoites. Required for the trophozoite to schizont developmental transition of the intracellular parasite. This is High molecular weight rhoptry protein 3 from Plasmodium falciparum (isolate 3D7).